Reading from the N-terminus, the 975-residue chain is 5'-3' exoribonuclease 2 homolog (975 aa).

Residues 262–279 (RACDLCGQYGHELKECRG) form a CCHC-type zinc finger. Disordered stretches follow at residues 424–443 (MQMY…GRGQ) and 505–532 (SPAD…EGPK). The interaction with paxt-1 stretch occupies residues 534-787 (DIRLYESGWK…GICVLYEDPE (254 aa)). A compositionally biased stretch (basic and acidic residues) spans 804–821 (EPEKTLKPDDWNDRRDGR). The interval 804–975 (EPEKTLKPDD…GGYHGNSSWR (172 aa)) is disordered. Gly residues-rich tracts occupy residues 850 to 860 (RGGGGGGGGYR), 886 to 895 (NYGGRDGGGP), and 908 to 932 (GYQG…GGGS).

Belongs to the 5'-3' exonuclease family. XRN2/RAT1 subfamily. In terms of assembly, interacts with paxt-1 (via N-terminus); the interaction is direct and results in stabilization of xrn-2 in the complex. As to expression, expressed in the pharyngeal myoepithelium and intestine. Also expressed in several anterior neurons including the sensory neurons, as well as the interneuron PVT and the pharyngeal motorneuron M5.

It is found in the nucleus. Its function is as follows. Possesses 5'-&gt;3' exoribonuclease activity. Plays a role in maintenance of steady-state concentration and turnover of microRNAs (miRNA) by degradation of mature miRNA. Degradation role is enhanced when in complex with paxt-1. Partially redundant to xrn-1 in miRNA guide strand degradation. Implicated in differential regulation of mRNAs such as let-7 by controlling the accumulation of mature miRNA. Positively regulates molting of the pharyngeal cuticle. The chain is 5'-3' exoribonuclease 2 homolog from Caenorhabditis elegans.